The sequence spans 283 residues: Urease accessory protein UreD 1 (283 aa).

This sequence belongs to the UreD family. UreD, UreF and UreG form a complex that acts as a GTP-hydrolysis-dependent molecular chaperone, activating the urease apoprotein by helping to assemble the nickel containing metallocenter of UreC. The UreE protein probably delivers the nickel.

The protein resides in the cytoplasm. Required for maturation of urease via the functional incorporation of the urease nickel metallocenter. This is Urease accessory protein UreD 1 from Brucella anthropi (strain ATCC 49188 / DSM 6882 / CCUG 24695 / JCM 21032 / LMG 3331 / NBRC 15819 / NCTC 12168 / Alc 37) (Ochrobactrum anthropi).